The following is a 285-amino-acid chain: Probable endonuclease 4 (285 aa).

Residues His69, His109, Glu145, Asp179, His182, His216, Asp229, His231, and Glu261 each contribute to the Zn(2+) site.

It belongs to the AP endonuclease 2 family. Requires Zn(2+) as cofactor.

The catalysed reaction is Endonucleolytic cleavage to 5'-phosphooligonucleotide end-products.. Functionally, endonuclease IV plays a role in DNA repair. It cleaves phosphodiester bonds at apurinic or apyrimidinic (AP) sites, generating a 3'-hydroxyl group and a 5'-terminal sugar phosphate. This Escherichia coli O81 (strain ED1a) protein is Probable endonuclease 4.